Consider the following 438-residue polypeptide: Glycerophosphocholine cholinephosphodiesterase ENPP6 (438 aa).

A signal peptide spans 1 to 22 (MTRTLLKIYTLFILLLCRQRDA). Asp32, Ser69, and Asn90 together coordinate substrate. Residues Asp32 and Ser69 each coordinate Zn(2+). Residue Ser69 is the Nucleophile of the active site. Ser69 is subject to Phosphoserine. Cys140 and Cys152 form a disulfide bridge. Residues 162–226 (KNLTDSMENA…ILNQKIREKN (65 aa)) are a coiled coil. The N-linked (GlcNAc...) asparagine glycan is linked to Asn163. Asp191 contributes to the substrate binding site. Zn(2+) contacts are provided by Asp191, His195, Asp238, and His239. Substrate is bound at residue His239. N-linked (GlcNAc...) asparagine glycans are attached at residues Asn258, Asn287, and Asn339. His352 lines the substrate pocket. His352 contributes to the Zn(2+) binding site. N-linked (GlcNAc...) asparagine glycosylation occurs at Asn402. Ser415 carries GPI-anchor amidated serine lipidation. A propeptide spans 416–438 (AATAGASLISCCFLLLLTLTGVC) (removed in mature form).

The protein belongs to the nucleotide pyrophosphatase/phosphodiesterase family. Zn(2+) is required as a cofactor.

The protein resides in the cell membrane. It carries out the reaction sn-glycerol 3-phosphocholine + H2O = phosphocholine + glycerol + H(+). The enzyme catalyses a 1-acyl-sn-glycero-3-phosphocholine + H2O = a 1-acyl-sn-glycerol + phosphocholine + H(+). It catalyses the reaction a 1-O-alkyl-sn-glycero-3-phosphocholine + H2O = a 1-O-alkyl-sn-glycerol + phosphocholine + H(+). The catalysed reaction is 1-dodecanoyl-sn-glycero-3-phosphocholine + H2O = 1-dodecanoyl-sn-glycerol + phosphocholine + H(+). It carries out the reaction 1-hexadecanoyl-sn-glycero-3-phosphocholine + H2O = 1-hexadecanoyl-sn-glycerol + phosphocholine + H(+). The enzyme catalyses 1-(5Z,8Z,11Z,14Z-eicosatetraenoyl)-sn-glycero-3-phosphocholine + H2O = 1-(5Z,8Z,11Z,14Z-eicosatetraenoyl)-sn-glycerol + phosphocholine + H(+). It catalyses the reaction 1-tetradecanoyl-sn-glycero-3-phosphocholine + H2O = 1-tetradecanoyl-sn-glycerol + phosphocholine + H(+). The catalysed reaction is sphing-4-enine-phosphocholine + H2O = sphing-4-enine + phosphocholine + H(+). It carries out the reaction 1-(9Z-octadecenoyl)-sn-glycero-3-phosphocholine + H2O = 1-(9Z-octadecenoyl)-sn-glycerol + phosphocholine + H(+). The enzyme catalyses 1-(9Z,12Z)-octadecadienoyl-sn-glycero-3-phosphocholine + H2O = 1-(9Z,12Z-octadecadienoyl)-sn-glycerol + phosphocholine + H(+). It catalyses the reaction glycero-2-phosphocholine + H2O = phosphocholine + glycerol + H(+). Choline-specific glycerophosphodiesterase that hydrolyzes glycerophosphocholine (GPC) and lysophosphatidylcholine (LPC) and contributes to supplying choline to the cells. Has a preference for LPC with short (12:0 and 14:0) or polyunsaturated (18:2 and 20:4) fatty acids. In vitro, hydrolyzes only choline-containing lysophospholipids, such as sphingosylphosphorylcholine (SPC), platelet-activating factor (PAF) and lysoPAF, but not other lysophospholipids. This is Glycerophosphocholine cholinephosphodiesterase ENPP6 from Danio rerio (Zebrafish).